The following is a 144-amino-acid chain: ALSAADAGLLAQSWAPVFANSDANGASFLVALFTQFPESANFFNDFKGKSLADIQASPKLRDVSSRIFARLNEFVSNAADAGKMGSMLQQFATEHAGFGVGSAQFQNVRSMFPGFVASLSAPAADAAWNSLFGLIISALQSAGK.

Ala-1 bears the N-acetylalanine mark. The Globin domain occupies 1 to 144; it reads ALSAADAGLL…IISALQSAGK (144 aa). Residue His-95 coordinates heme b.

Belongs to the globin family. Monomer.

The chain is Globin from Aplysia juliana (Walking sea hare).